The following is a 356-amino-acid chain: Protein pelota homolog (356 aa).

Belongs to the eukaryotic release factor 1 family. Pelota subfamily. As to quaternary structure, monomer. A divalent metal cation serves as cofactor.

It localises to the cytoplasm. May function in recognizing stalled ribosomes, interact with stem-loop structures in stalled mRNA molecules, and effect endonucleolytic cleavage of the mRNA. May play a role in the release non-functional ribosomes and degradation of damaged mRNAs. Has endoribonuclease activity. This is Protein pelota homolog from Pyrococcus abyssi (strain GE5 / Orsay).